Consider the following 71-residue polypeptide: Protein KleB (71 aa).

Residues 9-28 (IETCCRRCGKSIRTLSHTII) constitute a DNA-binding region (H-T-H motif).

The polypeptide is Protein KleB (kleB) (Escherichia coli).